The primary structure comprises 205 residues: Metal-independent carbonic anhydrase (205 aa).

The N-terminal stretch at 1–24 (MNLFKPRILVLFAATALISGIAIV) is a signal peptide. Thr106 and Tyr124 together coordinate hydrogencarbonate.

The protein belongs to the iota-class carbonic anhydrase family. Homotetramer; dimer of dimers. Requires Does not require a metal cofactor. as cofactor.

It catalyses the reaction hydrogencarbonate + H(+) = CO2 + H2O. Activity is not affected by EDTA or 2,6-pyridinedicarboxylic acid (PDA). Activity is not affected by addition of most divalent metal ions, except zinc ions which decrease the activity. Inhibited by the iodide ion. Catalyzes the hydration of carbon dioxide (CO2) to bicarbonate (HCO3(-)). Has only very low bicarbonate dehydration activity. May function even in metal-poor environments. The chain is Metal-independent carbonic anhydrase from Nostoc sp. (strain PCC 7120 / SAG 25.82 / UTEX 2576).